Here is a 77-residue protein sequence, read N- to C-terminus: Exodeoxyribonuclease 7 small subunit (77 aa).

The protein belongs to the XseB family. In terms of assembly, heterooligomer composed of large and small subunits.

The protein resides in the cytoplasm. It catalyses the reaction Exonucleolytic cleavage in either 5'- to 3'- or 3'- to 5'-direction to yield nucleoside 5'-phosphates.. Its function is as follows. Bidirectionally degrades single-stranded DNA into large acid-insoluble oligonucleotides, which are then degraded further into small acid-soluble oligonucleotides. The polypeptide is Exodeoxyribonuclease 7 small subunit (Lysinibacillus sphaericus (strain C3-41)).